Reading from the N-terminus, the 83-residue chain is Cytochrome b559 subunit alpha (83 aa).

A helical transmembrane segment spans residues 22-36 (VIHAVTLPAIFLAGF). Residue His24 coordinates heme.

It belongs to the PsbE/PsbF family. In terms of assembly, heterodimer of an alpha subunit and a beta subunit. PSII is composed of 1 copy each of membrane proteins PsbA, PsbB, PsbC, PsbD, PsbE, PsbF, PsbH, PsbI, PsbJ, PsbK, PsbL, PsbM, PsbT, PsbX, PsbY, PsbZ, Psb30/Ycf12, peripheral proteins PsbO, CyanoQ (PsbQ), PsbU, PsbV and a large number of cofactors. It forms dimeric complexes. It depends on heme b as a cofactor.

It localises to the cellular thylakoid membrane. Functionally, this b-type cytochrome is tightly associated with the reaction center of photosystem II (PSII). PSII is a light-driven water:plastoquinone oxidoreductase that uses light energy to abstract electrons from H(2)O, generating O(2) and a proton gradient subsequently used for ATP formation. It consists of a core antenna complex that captures photons, and an electron transfer chain that converts photonic excitation into a charge separation. In Synechococcus sp. (strain RCC307), this protein is Cytochrome b559 subunit alpha.